Reading from the N-terminus, the 240-residue chain is tRNA (guanine-N(1)-)-methyltransferase (240 aa).

S-adenosyl-L-methionine contacts are provided by residues G110 and 129 to 134 (LGDFVL).

The protein belongs to the RNA methyltransferase TrmD family. In terms of assembly, homodimer.

It is found in the cytoplasm. It catalyses the reaction guanosine(37) in tRNA + S-adenosyl-L-methionine = N(1)-methylguanosine(37) in tRNA + S-adenosyl-L-homocysteine + H(+). In terms of biological role, specifically methylates guanosine-37 in various tRNAs. The sequence is that of tRNA (guanine-N(1)-)-methyltransferase from Clostridium botulinum (strain Langeland / NCTC 10281 / Type F).